Consider the following 528-residue polypeptide: Glucose-6-phosphate isomerase (528 aa).

Glu322 functions as the Proton donor in the catalytic mechanism. Residues His351 and Lys455 contribute to the active site.

The protein belongs to the GPI family.

The protein localises to the cytoplasm. It catalyses the reaction alpha-D-glucose 6-phosphate = beta-D-fructose 6-phosphate. The protein operates within carbohydrate biosynthesis; gluconeogenesis. It participates in carbohydrate degradation; glycolysis; D-glyceraldehyde 3-phosphate and glycerone phosphate from D-glucose: step 2/4. Its function is as follows. Catalyzes the reversible isomerization of glucose-6-phosphate to fructose-6-phosphate. This is Glucose-6-phosphate isomerase from Trichormus variabilis (strain ATCC 29413 / PCC 7937) (Anabaena variabilis).